The chain runs to 529 residues: Bifunctional purine biosynthesis protein PurH (529 aa).

An MGS-like domain is found at 1-146 (MAPTALLSVS…KNHAHVAVLT (146 aa)).

The protein belongs to the PurH family.

The enzyme catalyses (6R)-10-formyltetrahydrofolate + 5-amino-1-(5-phospho-beta-D-ribosyl)imidazole-4-carboxamide = 5-formamido-1-(5-phospho-D-ribosyl)imidazole-4-carboxamide + (6S)-5,6,7,8-tetrahydrofolate. It catalyses the reaction IMP + H2O = 5-formamido-1-(5-phospho-D-ribosyl)imidazole-4-carboxamide. Its pathway is purine metabolism; IMP biosynthesis via de novo pathway; 5-formamido-1-(5-phospho-D-ribosyl)imidazole-4-carboxamide from 5-amino-1-(5-phospho-D-ribosyl)imidazole-4-carboxamide (10-formyl THF route): step 1/1. It functions in the pathway purine metabolism; IMP biosynthesis via de novo pathway; IMP from 5-formamido-1-(5-phospho-D-ribosyl)imidazole-4-carboxamide: step 1/1. This is Bifunctional purine biosynthesis protein PurH from Synechococcus sp. (strain CC9311).